The chain runs to 753 residues: Catalase-peroxidase (753 aa).

Positions 1–39 (MLPRVNKRSNCIAKKTSNRLISAVSLAIASLCISQSALA) are cleaved as a signal peptide. The tryptophyl-tyrosyl-methioninium (Trp-Tyr) (with M-267) cross-link spans 118-241 (WHSTGTYRMS…LAAVQMGLIY (124 aa)). Residue His119 is the Proton acceptor of the active site. A cross-link (tryptophyl-tyrosyl-methioninium (Tyr-Met) (with W-118)) is located at residues 241 to 267 (YVNPEGPNGNHDPISAAADIRDVFARM). His282 is a binding site for heme b.

The protein belongs to the peroxidase family. Peroxidase/catalase subfamily. Homodimer or homotetramer. Heme b is required as a cofactor. Formation of the three residue Trp-Tyr-Met cross-link is important for the catalase, but not the peroxidase activity of the enzyme.

It carries out the reaction H2O2 + AH2 = A + 2 H2O. It catalyses the reaction 2 H2O2 = O2 + 2 H2O. In terms of biological role, bifunctional enzyme with both catalase and broad-spectrum peroxidase activity. The chain is Catalase-peroxidase from Pseudoalteromonas atlantica (strain T6c / ATCC BAA-1087).